Here is a 466-residue protein sequence, read N- to C-terminus: Fumarate hydratase class II (466 aa).

Substrate contacts are provided by residues 99–101, 129–132, 139–141, and Thr187; these read SGT, HPND, and SSN. Residue His188 is the Proton donor/acceptor of the active site. The active site involves Ser318. Residues Ser319 and 324–326 each bind substrate; that span reads KVN.

This sequence belongs to the class-II fumarase/aspartase family. Fumarase subfamily. As to quaternary structure, homotetramer.

The protein localises to the cytoplasm. The catalysed reaction is (S)-malate = fumarate + H2O. The protein operates within carbohydrate metabolism; tricarboxylic acid cycle; (S)-malate from fumarate: step 1/1. In terms of biological role, involved in the TCA cycle. Catalyzes the stereospecific interconversion of fumarate to L-malate. This is Fumarate hydratase class II from Thermus thermophilus (strain ATCC BAA-163 / DSM 7039 / HB27).